A 55-amino-acid chain; its full sequence is Spermatid nuclear transition protein 1 (55 aa).

The segment covering 1-42 (MSTSRKLKSHGMRRSKSRSPHKGVKRGGSKRKYRKGNLKSRK) has biased composition (basic residues). Residues 1-55 (MSTSRKLKSHGMRRSKSRSPHKGVKRGGSKRKYRKGNLKSRKRGDDANRNYRSHL) form a disordered region. 2 positions are modified to phosphoserine: S9 and S40.

The protein belongs to the nuclear transition protein 1 family. Expressed by spermatids (at protein level).

Its subcellular location is the nucleus. The protein resides in the chromosome. In terms of biological role, plays a key role in the replacement of histones to protamine in the elongating spermatids of mammals. In condensing spermatids, loaded onto the nucleosomes, where it promotes the recruitment and processing of protamines, which are responsible for histone eviction. This chain is Spermatid nuclear transition protein 1 (TNP1), found in Homo sapiens (Human).